Consider the following 35-residue polypeptide: Malate dehydrogenase, mitochondrial (35 aa).

Asn7 contacts NAD(+). A substrate-binding site is contributed by Arg23.

This sequence belongs to the LDH/MDH superfamily. MDH type 1 family. Homodimer.

It localises to the mitochondrion matrix. It catalyses the reaction (S)-malate + NAD(+) = oxaloacetate + NADH + H(+). This chain is Malate dehydrogenase, mitochondrial, found in Capsicum annuum var. annuum (Red pepper).